The chain runs to 97 residues: Small ribosomal subunit protein bS6 (97 aa).

This sequence belongs to the bacterial ribosomal protein bS6 family.

In terms of biological role, binds together with bS18 to 16S ribosomal RNA. In Listeria monocytogenes serotype 4b (strain CLIP80459), this protein is Small ribosomal subunit protein bS6.